The sequence spans 224 residues: Claudin-19 (224 aa).

Residues 1–7 lie on the Cytoplasmic side of the membrane; the sequence is MANSGLQ. The helical transmembrane segment at 8–28 threads the bilayer; it reads LLGYFLALGGWVGIIASTALP. Residues 29–81 are Extracellular-facing; that stretch reads QWKQSSYAGDAIITAVGLYEGLWMSCASQSTGQVQCKLYDSLLALDGHIQSAR. Cys-54 and Cys-64 are disulfide-bonded. Residues 82–102 form a helical membrane-spanning segment; that stretch reads ALMVVAVLLGFVAMVLSVVGM. Topologically, residues 103–117 are cytoplasmic; the sequence is KCTRVGDSNPTAKGR. The chain crosses the membrane as a helical span at residues 118 to 138; sequence VAISGGALFLLAGLCTLTAVS. Topologically, residues 139-160 are extracellular; the sequence is WYATLVTQEFFNPSTPVNARYE. A helical transmembrane segment spans residues 161-181; sequence FGPALFVGWASAGLAILGGSF. Residues 182-224 lie on the Cytoplasmic side of the membrane; the sequence is LCCTCPEPERANSIPQPYRSGPSTAAREPVVKLSTSVKGPLGV.

This sequence belongs to the claudin family. In terms of assembly, can form homo- and heteropolymeric tight junction strands. Interacts with other claudins including CLDN3, CLDN10, CLDN16 and CLDN18 with highest affinity for CLDN16. Interacts (via PDZ-binding motif TRV) with TJP1 (via PDZ domain).

It localises to the cell junction. The protein resides in the tight junction. It is found in the cell membrane. The enzyme catalyses Mg(2+)(in) = Mg(2+)(out). The catalysed reaction is Ca(2+)(in) = Ca(2+)(out). It carries out the reaction Na(+)(in) = Na(+)(out). It catalyses the reaction K(+)(in) = K(+)(out). The enzyme catalyses Rb(+)(in) = Rb(+)(out). The catalysed reaction is Cs(+)(in) = Cs(+)(out). It carries out the reaction Li(+)(in) = Li(+)(out). Functionally, forms paracellular channels: coassembles with CLDN16 into tight junction strands with cation-selective channels through the strands, conveying epithelial permeability in a process known as paracellular tight junction permeability. Involved in the maintenance of ion gradients along the nephron. In the thick ascending limb (TAL) of Henle's loop, facilitates sodium paracellular permeability from the interstitial compartment to the lumen, contributing to the lumen-positive transepithelial potential that drives paracellular magnesium and calcium reabsorption. Forms paracellular barriers on its own. In the peripheral nervous system, represents a major constituent of the tight junctions in Schwann cells and contributes to electrical sealing. During retinal neurogenesis, may regulate the barrier properties of tight junctions in retinal pigment epithelium, required for proper retinal tissue differentiation and vision. This Rattus norvegicus (Rat) protein is Claudin-19.